A 118-amino-acid chain; its full sequence is Small ribosomal subunit protein uS13 (118 aa).

Residues 94 to 118 (GLPVRGQRTKTNARTRKGPRKPIKK) form a disordered region.

This sequence belongs to the universal ribosomal protein uS13 family. As to quaternary structure, part of the 30S ribosomal subunit. Forms a loose heterodimer with protein S19. Forms two bridges to the 50S subunit in the 70S ribosome.

Its function is as follows. Located at the top of the head of the 30S subunit, it contacts several helices of the 16S rRNA. In the 70S ribosome it contacts the 23S rRNA (bridge B1a) and protein L5 of the 50S subunit (bridge B1b), connecting the 2 subunits; these bridges are implicated in subunit movement. Contacts the tRNAs in the A and P-sites. The chain is Small ribosomal subunit protein uS13 from Mannheimia succiniciproducens (strain KCTC 0769BP / MBEL55E).